A 140-amino-acid polypeptide reads, in one-letter code: Peptide methionine sulfoxide reductase MsrB (140 aa).

The MsrB domain maps to 10–132; it reads EEDWKSVLTP…NSVSLGFTKE (123 aa). Zn(2+)-binding residues include Cys49, Cys52, Cys98, and Cys101. The active-site Nucleophile is Cys121.

Belongs to the MsrB Met sulfoxide reductase family. It depends on Zn(2+) as a cofactor.

The catalysed reaction is L-methionyl-[protein] + [thioredoxin]-disulfide + H2O = L-methionyl-(R)-S-oxide-[protein] + [thioredoxin]-dithiol. The chain is Peptide methionine sulfoxide reductase MsrB from Methanosarcina mazei (strain ATCC BAA-159 / DSM 3647 / Goe1 / Go1 / JCM 11833 / OCM 88) (Methanosarcina frisia).